A 247-amino-acid polypeptide reads, in one-letter code: Cytochrome c oxidase subunit 2 (247 aa).

The N-terminal stretch at 1-11 (MFYLLNSIIMN) is a signal peptide. Residues 12 to 38 (DVPTPYGMYFQDSATPNQEGILELHDN) lie on the Mitochondrial intermembrane side of the membrane. Residues 39 to 59 (IMFYLFIILGLVSWLLFTIVR) form a helical membrane-spanning segment. Topologically, residues 60–78 (TYSKNPIAYKYIKHGQTIE) are mitochondrial matrix. The helical transmembrane segment at 79–101 (IIWTIFPAVILLIIAFPSFILLY) threads the bilayer. The Mitochondrial intermembrane segment spans residues 102 to 247 (LCDEVISPAM…PAFLEWLNEQ (146 aa)). Cu cation contacts are provided by histidine 182, cysteine 217, glutamate 219, cysteine 221, histidine 225, and methionine 228. Residue glutamate 219 participates in Mg(2+) binding.

Belongs to the cytochrome c oxidase subunit 2 family. In terms of assembly, component of the cytochrome c oxidase (complex IV, CIV), a multisubunit enzyme composed of a catalytic core of 3 subunits and several supernumerary subunits. The complex exists as a monomer or a dimer and forms supercomplexes (SCs) in the inner mitochondrial membrane with ubiquinol-cytochrome c oxidoreductase (cytochrome b-c1 complex, complex III, CIII). Cu cation is required as a cofactor. In terms of processing, the signal sequence of COX2 is processed by IMP1.

Its subcellular location is the mitochondrion inner membrane. It carries out the reaction 4 Fe(II)-[cytochrome c] + O2 + 8 H(+)(in) = 4 Fe(III)-[cytochrome c] + 2 H2O + 4 H(+)(out). Component of the cytochrome c oxidase, the last enzyme in the mitochondrial electron transport chain which drives oxidative phosphorylation. The respiratory chain contains 3 multisubunit complexes succinate dehydrogenase (complex II, CII), ubiquinol-cytochrome c oxidoreductase (cytochrome b-c1 complex, complex III, CIII) and cytochrome c oxidase (complex IV, CIV), that cooperate to transfer electrons derived from NADH and succinate to molecular oxygen, creating an electrochemical gradient over the inner membrane that drives transmembrane transport and the ATP synthase. Cytochrome c oxidase is the component of the respiratory chain that catalyzes the reduction of oxygen to water. Electrons originating from reduced cytochrome c in the intermembrane space (IMS) are transferred via the dinuclear copper A center (CU(A)) of subunit 2 and heme A of subunit 1 to the active site in subunit 1, a binuclear center (BNC) formed by heme A3 and copper B (CU(B)). The BNC reduces molecular oxygen to 2 water molecules using 4 electrons from cytochrome c in the IMS and 4 protons from the mitochondrial matrix. This chain is Cytochrome c oxidase subunit 2 (COX2), found in Kluyveromyces lactis (strain ATCC 8585 / CBS 2359 / DSM 70799 / NBRC 1267 / NRRL Y-1140 / WM37) (Yeast).